Reading from the N-terminus, the 250-residue chain is Probable aquaporin TIP2-2 (250 aa).

An N-acetylmethionine modification is found at Met-1. The Cytoplasmic portion of the chain corresponds to 1 to 24 (MVKIEIGSVGDSFSVASLKAYLSE). Lys-3 carries the post-translational modification N6,N6-dimethyllysine. A helical membrane pass occupies residues 25–45 (FIATLLFVFAGVGSALAFAKL). The Vacuolar portion of the chain corresponds to 46–53 (TSDAALDP). The chain crosses the membrane as a helical span at residues 54–74 (AGLVAVAVAHAFALFVGVSIA). Topologically, residues 75 to 101 (ANISGGHLNPAVTLGLAVGGNITVITG) are cytoplasmic. An NPA 1 motif is present at residues 83-85 (NPA). The helical transmembrane segment at 102 to 122 (FFYWIAQCLGSIVACLLLVFV) threads the bilayer. Topologically, residues 123–133 (TNGESVPTHGV) are vacuolar. The chain crosses the membrane as a helical span at residues 134–154 (AAGLGAIEGVVMEIVVTFALV). Residues 155–168 (YTVYATAADPKKGS) lie on the Cytoplasmic side of the membrane. Residues 169-189 (LGTIAPIAIGFIVGANILAAG) form a helical membrane-spanning segment. The Vacuolar segment spans residues 190–210 (PFSGGSMNPARSFGPAVVSGD). The NPA 2 signature appears at 197–199 (NPA). A helical transmembrane segment spans residues 211–231 (FSQIWIYWVGPLVGGALAGLI). At 232-250 (YGDVFIGSYAPAPTTESYP) the chain is on the cytoplasmic side. Ser-248 carries the phosphoserine modification.

This sequence belongs to the MIP/aquaporin (TC 1.A.8) family. TIP (TC 1.A.8.10) subfamily. In terms of assembly, interacts with cucumber mosaic virus (CMV) Protein 1a. In terms of tissue distribution, expressed above groung and in roots.

The protein localises to the vacuole membrane. Aquaporins facilitate the transport of water and small neutral solutes across cell membranes. The sequence is that of Probable aquaporin TIP2-2 (TIP2-2) from Arabidopsis thaliana (Mouse-ear cress).